Consider the following 521-residue polypeptide: Probable rhamnogalacturonase B (521 aa).

An N-terminal signal peptide occupies residues methionine 1–alanine 21. A disulfide bridge connects residues cysteine 42 and cysteine 68. A glycan (N-linked (GlcNAc...) asparagine) is linked at asparagine 145. Aspartate 219 serves as the catalytic Proton donor. Cysteine 221 and cysteine 238 form a disulfide bridge. Asparagine 239 carries an N-linked (GlcNAc...) asparagine glycan. Residue histidine 294 is part of the active site. Asparagine 321 carries N-linked (GlcNAc...) asparagine glycosylation. 2 disulfide bridges follow: cysteine 344-cysteine 350 and cysteine 372-cysteine 381. The interval glutamate 462–isoleucine 521 is disordered. The segment covering arginine 469–proline 486 has biased composition (polar residues). Basic residues predominate over residues proline 507 to isoleucine 521.

Belongs to the glycosyl hydrolase 28 family.

Its subcellular location is the secreted. It carries out the reaction Endohydrolysis of alpha-D-GalA-(1-&gt;2)-alpha-L-Rha glycosidic bond in the rhamnogalacturonan I backbone with initial inversion of anomeric configuration releasing oligosaccharides with beta-D-GalA at the reducing end.. In terms of biological role, pectinolytic enzymes consist of four classes of enzymes: pectine lyase, polygalacturonase, pectin methylesterase and rhamnogalacturonase. Hydrolyzes alpha-D-galacturonopyranosyl-(1,2)-alpha-L-rhamnopyranosyl linkages in the backbone of the hairy regions of pectins. This is Probable rhamnogalacturonase B (rhgB) from Aspergillus fumigatus (strain ATCC MYA-4609 / CBS 101355 / FGSC A1100 / Af293) (Neosartorya fumigata).